The following is a 364-amino-acid chain: Biotin synthase (364 aa).

One can recognise a Radical SAM core domain in the interval 68 to 303 (CCGNTVDLCS…QQILRYAGGR (236 aa)). Residues C86, C90, and C93 each coordinate [4Fe-4S] cluster. C131, C168, C228, and R298 together coordinate [2Fe-2S] cluster.

This sequence belongs to the radical SAM superfamily. Biotin synthase family. In terms of assembly, homodimer. The cofactor is [4Fe-4S] cluster. Requires [2Fe-2S] cluster as cofactor.

It catalyses the reaction (4R,5S)-dethiobiotin + (sulfur carrier)-SH + 2 reduced [2Fe-2S]-[ferredoxin] + 2 S-adenosyl-L-methionine = (sulfur carrier)-H + biotin + 2 5'-deoxyadenosine + 2 L-methionine + 2 oxidized [2Fe-2S]-[ferredoxin]. It functions in the pathway cofactor biosynthesis; biotin biosynthesis; biotin from 7,8-diaminononanoate: step 2/2. Functionally, catalyzes the conversion of dethiobiotin (DTB) to biotin by the insertion of a sulfur atom into dethiobiotin via a radical-based mechanism. This Microcystis aeruginosa (strain NIES-843 / IAM M-2473) protein is Biotin synthase.